The sequence spans 625 residues: Putative surface protein bspA-like (625 aa).

Topologically, residues 1 to 548 (MMTPGKSSKT…KAIKGGEIAG (548 aa)) are extracellular. The N-linked (GlcNAc...) asparagine glycan is linked to Asn-15. LRR repeat units lie at residues 38–60 (CSSF…AFTG), 61–83 (CSSL…AFSE), 85–106 (SSIT…AFSG), 107–129 (CSKL…AFRG), 153–175 (CSSL…AFYG), 176–198 (CSSL…AFQE), 200–221 (SKLT…AFKR), 222–245 (CSSL…FYEC), 247–267 (KLTS…AFSK), 271–293 (LTSI…VFLN), 325–347 (IPKS…TLTH), 348–368 (FTNL…PESF), and 369–392 (IEGD…AFKD). The N-linked (GlcNAc...) asparagine glycan is linked to Asn-227. The disordered stretch occupies residues 439–538 (KQSEENPNQP…TDDPSKSKEN (100 aa)). Residues 443–526 (ENPNQPGENP…QPGENPSQPG (84 aa)) show a composition bias toward low complexity. Residues 549-571 (IIIGSLIGICLVVAICFGVYYYF) traverse the membrane as a helical segment. At 572–625 (MRIKPKNKNDDNEGNQEDTIANGTNEVTNENVLATFDEQPNNESDSNGLDSAEV) the chain is on the cytoplasmic side. The segment at 577-625 (KNKNDDNEGNQEDTIANGTNEVTNENVLATFDEQPNNESDSNGLDSAEV) is disordered. The segment covering 588–625 (EDTIANGTNEVTNENVLATFDEQPNNESDSNGLDSAEV) has biased composition (polar residues).

Its subcellular location is the cell membrane. In terms of biological role, may bind host tissue. The polypeptide is Putative surface protein bspA-like (BSPAL1) (Trichomonas vaginalis).